The sequence spans 309 residues: Elongation factor Ts, mitochondrial (309 aa).

The protein belongs to the EF-Ts family.

It is found in the mitochondrion. Associates with the EF-Tu.GDP complex and induces the exchange of GDP to GTP. It remains bound to the aminoacyl-tRNA.EF-Tu.GTP complex up to the GTP hydrolysis stage on the ribosome. The sequence is that of Elongation factor Ts, mitochondrial (tsfm) from Salmo salar (Atlantic salmon).